Consider the following 174-residue polypeptide: Secretory-abundant heat soluble protein 68234 (174 aa).

The signal sequence occupies residues Met1 to Ala19. Residues Glu26–Pro57 are SAHS-c1. The SAHS-c2 stretch occupies residues Tyr72–Glu100. Positions Lys113–Lys162 are SAHS-c3.

This sequence belongs to the Secretory-abundant heat soluble protein (SAHS) family.

Its subcellular location is the secreted. Its function is as follows. Secreted heat soluble protein acting as a molecular shield in water-deficient condition. Tardigrade-specific intrinsically disordered proteins (TDPs) are essential for desiccation tolerance by forming non-crystalline amorphous solids upon desiccation, and this vitrified state mirrors their protective capabilities. This is Secretory-abundant heat soluble protein 68234 from Hypsibius exemplaris (Freshwater tardigrade).